We begin with the raw amino-acid sequence, 431 residues long: Putative transcription factor R429 (431 aa).

The stretch at 28-95 forms a coiled coil; sequence NKFENMSKAL…SIENCSESLD (68 aa). The disordered stretch occupies residues 142–187; sequence SQQENSSESNNDIVKNGTGGSTSKRKKIQPSNRCSGSKTGKVTETK. Low complexity predominate over residues 143-152; sequence QQENSSESNN. The span at 170–181 shows a compositional bias: polar residues; the sequence is QPSNRCSGSKTG. The segment at 218-241 is a zinc-finger region; that stretch reads CSVPDCDGEKILNQNDGYMVCKKC.

This sequence belongs to the nucleo-cytoplasmic large DNA viruses (NCLDVs) VLTF-3 family.

Putative transcription factor. This Acanthamoeba polyphaga (Amoeba) protein is Putative transcription factor R429.